A 121-amino-acid chain; its full sequence is Small ribosomal subunit protein uS13 (121 aa).

The segment at 93 to 121 (RGLPVRGQNSKNNARTRKGPRRTVANKKK) is disordered. The span at 106 to 121 (ARTRKGPRRTVANKKK) shows a compositional bias: basic residues.

This sequence belongs to the universal ribosomal protein uS13 family. In terms of assembly, part of the 30S ribosomal subunit. Forms a loose heterodimer with protein S19. Forms two bridges to the 50S subunit in the 70S ribosome.

Located at the top of the head of the 30S subunit, it contacts several helices of the 16S rRNA. In the 70S ribosome it contacts the 23S rRNA (bridge B1a) and protein L5 of the 50S subunit (bridge B1b), connecting the 2 subunits; these bridges are implicated in subunit movement. Contacts the tRNAs in the A and P-sites. The sequence is that of Small ribosomal subunit protein uS13 from Bacillus subtilis (strain 168).